The following is a 200-amino-acid chain: Cysteine dioxygenase type 1 (200 aa).

Fe cation is bound by residues histidine 86, histidine 88, and histidine 140. Positions 93 to 157 (CFLKLLQGNL…TEPAVSLHLY (65 aa)) form a cross-link, 3'-(S-cysteinyl)-tyrosine (Cys-Tyr).

The protein belongs to the cysteine dioxygenase family. In terms of assembly, monomer. Fe(2+) serves as cofactor. Ni(2+) is required as a cofactor. Requires Zn(2+) as cofactor. Post-translationally, the thioether cross-link between Cys-93 and Tyr-157 plays a structural role through stabilizing the Fe(2+) ion, and prevents the production of highly damaging free hydroxyl radicals by holding the oxygen radical via hydroxyl hydrogen. As to expression, highest expression in liver. Also expressed in kidney, lung, brain and small intestine.

It catalyses the reaction L-cysteine + O2 = 3-sulfino-L-alanine + H(+). Its pathway is organosulfur biosynthesis; taurine biosynthesis; hypotaurine from L-cysteine: step 1/2. Its function is as follows. Catalyzes the oxidation of cysteine to cysteine sulfinic acid with addition of molecular dioxygen. This Mus musculus (Mouse) protein is Cysteine dioxygenase type 1 (Cdo1).